A 160-amino-acid chain; its full sequence is Probable prefoldin subunit 5 (160 aa).

This sequence belongs to the prefoldin subunit alpha family. As to quaternary structure, heterohexamer of two PFD-alpha type and four PFD-beta type subunits.

Functionally, binds specifically to cytosolic chaperonin (c-CPN) and transfers target proteins to it. Binds to nascent polypeptide chain and promotes folding in an environment in which there are many competing pathways for nonnative proteins. This is Probable prefoldin subunit 5 (pfdn5) from Dictyostelium discoideum (Social amoeba).